The primary structure comprises 206 residues: Ribonuclease HII (206 aa).

The region spanning 14-206 (ALVCGIDEAG…FRLRQLGEKP (193 aa)) is the RNase H type-2 domain. 3 residues coordinate a divalent metal cation: Asp-20, Glu-21, and Asp-117.

It belongs to the RNase HII family. Requires Mn(2+) as cofactor. It depends on Mg(2+) as a cofactor.

The protein resides in the cytoplasm. It carries out the reaction Endonucleolytic cleavage to 5'-phosphomonoester.. Its function is as follows. Endonuclease that specifically degrades the RNA of RNA-DNA hybrids. The chain is Ribonuclease HII from Pelodictyon phaeoclathratiforme (strain DSM 5477 / BU-1).